The sequence spans 294 residues: MLTFQQIILKLQDYWDQQGCALLQPIDLEVGAGTSHTATFLRAIGPEPWKAAYVQPSRRPKDGRYGENPNRLQHYYQYQVVLKPAPENILELYLGSLATLGLDLKQNDIRFVEDDWENPTLGAWGLGWEVWLNGMEVTQFTYFQQVGGLDCKPVLGEITYGIERLAMYIQNCSNVYDLVWADGISYGDVYHQNEVEQSCYNFEHSNTDLLFANFTNFESEAKRLMEVPLALPAYEMVLKAAHTFNLLDARGAISVTERAAYIGRIRNLSRAVAQAYFESREKLGFPMCQRQVKA.

The protein belongs to the class-II aminoacyl-tRNA synthetase family. Tetramer of two alpha and two beta subunits.

The protein resides in the cytoplasm. It carries out the reaction tRNA(Gly) + glycine + ATP = glycyl-tRNA(Gly) + AMP + diphosphate. The chain is Glycine--tRNA ligase alpha subunit from Polynucleobacter asymbioticus (strain DSM 18221 / CIP 109841 / QLW-P1DMWA-1) (Polynucleobacter necessarius subsp. asymbioticus).